Reading from the N-terminus, the 257-residue chain is Expansin-A10 (257 aa).

A signal peptide spans 1 to 18; sequence MAPCLLLVLFLLPALATG. An Expansin-like EG45 domain is found at 50–163; the sequence is GGACGFGDLG…RRVNCLRDGG (114 aa). An Expansin-like CBD domain is found at 173–252; that stretch reads FFLTVLISNV…EWDFGKTYTG (80 aa).

This sequence belongs to the expansin family. Expansin A subfamily. As to expression, expressed in panicles and flowers.

It localises to the secreted. It is found in the cell wall. The protein resides in the membrane. In terms of biological role, may cause loosening and extension of plant cell walls by disrupting non-covalent bonding between cellulose microfibrils and matrix glucans. No enzymatic activity has been found. May be required for rapid internodal elongation in deepwater rice during submergence. This Oryza sativa subsp. japonica (Rice) protein is Expansin-A10 (EXPA10).